We begin with the raw amino-acid sequence, 185 residues long: MRHPLVKNAEDRMNKAVEKISEELRKMRTGRPSPAILEEIKVDYYGAQTPISQLATVNITEDRALIIKPWDRSVLSSIEKAIFASDLGLTPQNDGNVIRLTFPTPTTEQRQKWAKKAKEIAEQGKIAIRNIRRDILKELKGDTKDGKISEDDEKRIEKEIQDLTDKKILEIDKLLEKKEKEIMEV.

Belongs to the RRF family.

It is found in the cytoplasm. Its function is as follows. Responsible for the release of ribosomes from messenger RNA at the termination of protein biosynthesis. May increase the efficiency of translation by recycling ribosomes from one round of translation to another. The sequence is that of Ribosome-recycling factor from Pseudothermotoga lettingae (strain ATCC BAA-301 / DSM 14385 / NBRC 107922 / TMO) (Thermotoga lettingae).